Here is a 457-residue protein sequence, read N- to C-terminus: Probable xyloglucan 6-xylosyltransferase 5 (457 aa).

Positions 1 to 40 are disordered; it reads MGQDGSPAHKRPSGSGGGLPTTTLTNGGGRGGRGGLLPRG. Residues 1 to 51 are Cytoplasmic-facing; it reads MGQDGSPAHKRPSGSGGGLPTTTLTNGGGRGGRGGLLPRGRQMQKTFNNIK. Residues 26 to 37 are compositionally biased toward gly residues; that stretch reads NGGGRGGRGGLL. The chain crosses the membrane as a helical; Signal-anchor for type II membrane protein span at residues 52 to 72; sequence ITILCGFVTILVLRGTIGVGN. Over 73–457 the chain is Lumenal; sequence LGSSSADAVN…RTPVETKPQN (385 aa). The disordered stretch occupies residues 97–116; that stretch reads RSDSDPTDLDEPQEGDMNPN. Positions 101-110 are enriched in acidic residues; it reads DPTDLDEPQE. N-linked (GlcNAc...) asparagine glycans are attached at residues Asn-116 and Asn-432.

It belongs to the glycosyltransferase 34 family. In terms of assembly, interacts with XXT2 and CSLC4. Interacts with FUT1 and XLT2. In terms of tissue distribution, highly expressed in roots, stems and cauline leaves, and at lower levels in rosette leaves, flowers and siliques.

The protein resides in the golgi apparatus membrane. It catalyses the reaction Transfers an alpha-D-xylosyl residue from UDP-D-xylose to a glucose residue in xyloglucan, forming an alpha-(1-&gt;6)-D-xylosyl-D-glucose linkage.. In terms of biological role, probable xyloglucan xylosyltransferase involved in the biosynthesis of xyloglucan in roots. May act in association with XXT1 and XXT2. Associates with other xyloglucan-synthesizing enzymes to form multiprotein complexes for xyloglucan synthesis in the Golgi. The polypeptide is Probable xyloglucan 6-xylosyltransferase 5 (Arabidopsis thaliana (Mouse-ear cress)).